Consider the following 261-residue polypeptide: 1,6-dihydroxycyclohexa-2,4-diene-1-carboxylate dehydrogenase (261 aa).

Position 13 to 37 (13 to 37 (IVTGAAQGIGRGVALRIAQEGGCLI)) interacts with NAD(+). A substrate-binding site is contributed by serine 145. Tyrosine 156 functions as the Proton acceptor in the catalytic mechanism.

This sequence belongs to the short-chain dehydrogenases/reductases (SDR) family. As to quaternary structure, homodimer.

It catalyses the reaction (1R,6S)-1,6-dihydroxycyclohexa-2,4-diene-1-carboxylate + NAD(+) = catechol + CO2 + NADH. The protein operates within aromatic compound metabolism; benzoate degradation via hydroxylation; catechol from benzoate: step 2/2. Its function is as follows. Degradation of 2-hydro-1,2-dihydroxy benzoate (DHB) to catechol. The protein is 1,6-dihydroxycyclohexa-2,4-diene-1-carboxylate dehydrogenase (benD) of Acinetobacter baylyi (strain ATCC 33305 / BD413 / ADP1).